Consider the following 201-residue polypeptide: Small ribosomal subunit protein uS4 (201 aa).

The S4 RNA-binding domain occupies Ser91 to Gln154.

This sequence belongs to the universal ribosomal protein uS4 family. In terms of assembly, part of the 30S ribosomal subunit. Contacts protein S5. The interaction surface between S4 and S5 is involved in control of translational fidelity.

Its function is as follows. One of the primary rRNA binding proteins, it binds directly to 16S rRNA where it nucleates assembly of the body of the 30S subunit. In terms of biological role, with S5 and S12 plays an important role in translational accuracy. The protein is Small ribosomal subunit protein uS4 of Corynebacterium aurimucosum (strain ATCC 700975 / DSM 44827 / CIP 107346 / CN-1) (Corynebacterium nigricans).